A 154-amino-acid chain; its full sequence is Lipoprotein signal peptidase (154 aa).

Transmembrane regions (helical) follow at residues 55–75 (GQFW…VIYI) and 85–105 (AGVG…DRVF). Residues aspartate 111 and aspartate 129 contribute to the active site. Residues 127–147 (VADSALTVGVILLFVHMFFFA) traverse the membrane as a helical segment.

Belongs to the peptidase A8 family.

The protein resides in the cell membrane. It catalyses the reaction Release of signal peptides from bacterial membrane prolipoproteins. Hydrolyzes -Xaa-Yaa-Zaa-|-(S,diacylglyceryl)Cys-, in which Xaa is hydrophobic (preferably Leu), and Yaa (Ala or Ser) and Zaa (Gly or Ala) have small, neutral side chains.. It participates in protein modification; lipoprotein biosynthesis (signal peptide cleavage). In terms of biological role, this protein specifically catalyzes the removal of signal peptides from prolipoproteins. The polypeptide is Lipoprotein signal peptidase (Geobacillus kaustophilus (strain HTA426)).